A 308-amino-acid polypeptide reads, in one-letter code: D-alanine--D-alanine ligase (308 aa).

The 198-residue stretch at 105–302 (KAIFKALGLD…FPELCERILD (198 aa)) folds into the ATP-grasp domain. 133 to 188 (DLPFGVPCVVKPAGEGSSVGVQIVKDAARLADACREAARYKGDVVVERYVKGTEVN) is a binding site for ATP. Mg(2+) is bound by residues Asp-256, Glu-269, and Asn-271.

It belongs to the D-alanine--D-alanine ligase family. Mg(2+) is required as a cofactor. It depends on Mn(2+) as a cofactor.

The protein localises to the cytoplasm. The enzyme catalyses 2 D-alanine + ATP = D-alanyl-D-alanine + ADP + phosphate + H(+). The protein operates within cell wall biogenesis; peptidoglycan biosynthesis. Cell wall formation. The chain is D-alanine--D-alanine ligase from Anaeromyxobacter sp. (strain Fw109-5).